A 614-amino-acid polypeptide reads, in one-letter code: UvrABC system protein C (614 aa).

A GIY-YIG domain is found at 12–91 (ESPGVYLMKG…IKKHRPRYNL (80 aa)). The region spanning 201–236 (RDLLKTYRERMASAAANERYEEAARYRDLIRAIEVT) is the UVR domain.

Belongs to the UvrC family. In terms of assembly, interacts with UvrB in an incision complex.

The protein localises to the cytoplasm. Its function is as follows. The UvrABC repair system catalyzes the recognition and processing of DNA lesions. UvrC both incises the 5' and 3' sides of the lesion. The N-terminal half is responsible for the 3' incision and the C-terminal half is responsible for the 5' incision. In Geobacter metallireducens (strain ATCC 53774 / DSM 7210 / GS-15), this protein is UvrABC system protein C.